The chain runs to 294 residues: DNA replication complex GINS protein SLD5 (294 aa).

The protein belongs to the GINS4/SLD5 family. In terms of assembly, component of the GINS complex which is a heterotetramer composed of SLD5, PSF1, PSF2 and PSF3. Interacts with PSF2.

It localises to the nucleus. Functionally, required for DNA replication. Functions as part of the GINS complex which plays an essential role in the initiation of DNA replication by binding to DNA replication origins and facilitating the assembly of the DNA replication machinery. This is DNA replication complex GINS protein SLD5 from Saccharomyces cerevisiae (strain ATCC 204508 / S288c) (Baker's yeast).